Consider the following 218-residue polypeptide: NAD(P)H-hydrate epimerase (218 aa).

The YjeF N-terminal domain occupies 9-215 (MKKIDQYAID…DIGIPQKAIR (207 aa)). 55-59 (NNGAD) is a (6S)-NADPHX binding site. Residues asparagine 56 and aspartate 127 each contribute to the K(+) site. (6S)-NADPHX is bound by residues 131 to 137 (GTGLNRT) and aspartate 160. Serine 163 serves as a coordination point for K(+).

The protein belongs to the NnrE/AIBP family. The cofactor is K(+).

The catalysed reaction is (6R)-NADHX = (6S)-NADHX. The enzyme catalyses (6R)-NADPHX = (6S)-NADPHX. Catalyzes the epimerization of the S- and R-forms of NAD(P)HX, a damaged form of NAD(P)H that is a result of enzymatic or heat-dependent hydration. This is a prerequisite for the S-specific NAD(P)H-hydrate dehydratase to allow the repair of both epimers of NAD(P)HX. The chain is NAD(P)H-hydrate epimerase from Anaerococcus prevotii (strain ATCC 9321 / DSM 20548 / JCM 6508 / NCTC 11806 / PC1) (Peptostreptococcus prevotii).